A 374-amino-acid chain; its full sequence is Chaperone protein DnaJ (374 aa).

Residues 5-70 (DYYEVLGLEK…DKKANYDRFG (66 aa)) enclose the J domain. The CR-type zinc-finger motif lies at 137–219 (GVEKSINITR…CHGAGHVRKK (83 aa)). Residues cysteine 150, cysteine 153, cysteine 167, cysteine 170, cysteine 193, cysteine 196, cysteine 207, and cysteine 210 each coordinate Zn(2+). 4 CXXCXGXG motif repeats span residues 150 to 157 (CETCGGTG), 167 to 174 (CDKCGGTG), 193 to 200 (CDKCGGRG), and 207 to 214 (CHECHGAG).

The protein belongs to the DnaJ family. Homodimer. The cofactor is Zn(2+).

Its subcellular location is the cytoplasm. In terms of biological role, participates actively in the response to hyperosmotic and heat shock by preventing the aggregation of stress-denatured proteins and by disaggregating proteins, also in an autonomous, DnaK-independent fashion. Unfolded proteins bind initially to DnaJ; upon interaction with the DnaJ-bound protein, DnaK hydrolyzes its bound ATP, resulting in the formation of a stable complex. GrpE releases ADP from DnaK; ATP binding to DnaK triggers the release of the substrate protein, thus completing the reaction cycle. Several rounds of ATP-dependent interactions between DnaJ, DnaK and GrpE are required for fully efficient folding. Also involved, together with DnaK and GrpE, in the DNA replication of plasmids through activation of initiation proteins. This Clostridium acetobutylicum (strain ATCC 824 / DSM 792 / JCM 1419 / IAM 19013 / LMG 5710 / NBRC 13948 / NRRL B-527 / VKM B-1787 / 2291 / W) protein is Chaperone protein DnaJ.